An 876-amino-acid chain; its full sequence is ATPase WRNIP1 (876 aa).

Composition is skewed to low complexity over residues 56–85 and 104–175; these read NKSNGNNSINNNNNNKNTPTKPNLNLTPTK and NNNN…INNN. A disordered region spans residues 56–175; that stretch reads NKSNGNNSIN…NNNNNNINNN (120 aa). 240 to 246 is an ATP binding site; the sequence is PGCGKTT. Disordered stretches follow at residues 621–647, 714–737, and 833–876; these read KDRQQSQDQTQRSSQQQQQQQTQPQQQ, INNKNNDSNIIKKNVNNSLDLNPT, and ETKA…SLDF. 2 stretches are compositionally biased toward low complexity: residues 626–647 and 714–731; these read SQDQTQRSSQQQQQQQTQPQQQ and INNKNNDSNIIKKNVNNS. The segment covering 835-849 has biased composition (polar residues); that stretch reads KAISSTDTKESVSIN. Over residues 850–863 the composition is skewed to basic and acidic residues; it reads DSDKDLTTTHKNEQ.

The protein belongs to the AAA ATPase family. RarA/MGS1/WRNIP1 subfamily.

The protein localises to the nucleus. The catalysed reaction is ATP + H2O = ADP + phosphate + H(+). In terms of biological role, functions as a modulator for initiation or reinitiation events during DNA polymerase delta-mediated DNA synthesis. Has an intrinsic ATPase activity that functions as a sensor of DNA damage or of arrested replication forks and regulates the extent of DNA synthesis. The polypeptide is ATPase WRNIP1 (Dictyostelium discoideum (Social amoeba)).